We begin with the raw amino-acid sequence, 613 residues long: Carotenoid dioxygenase (613 aa).

Positions 1–25 are disordered; sequence MSPHEVIGTVPKNSTTFRTQADEHD. The Fe(2+) site is built by His-261, His-313, His-383, and His-595.

The protein belongs to the carotenoid oxygenase family. The cofactor is Fe(2+).

The protein localises to the cytoplasm. The protein resides in the cytosol. The catalysed reaction is torulene + O2 = 4'-apo-beta-carotenal + 3-methyl-2-butenal. Its pathway is carotenoid biosynthesis. In terms of biological role, torulene dioxygenase; part of pathway that mediates the biosynthesis of neurosporaxanthin, a carboxylic apocarotenoid acting as an essential protective pigments and leading to orange pigmentation. Cao-2 mediates the cleavage of torulene into beta-apo-4'-carotenal, the aldehyde corresponding to the acidic neurosporaxanthin. Is not able to use gamma-carotene (that it is not desaturated at the C4'-C5' bond) as substrate, which suggests a high specificity of cao-2 in cleaving the C4'-C5' double bond. Neurosporaxanthin is synthesized from geranyl-geranyl pyrophosphate (GGPP) through several enzymatic activities. Phytoene synthase activity performed by the bifunctional enzyme al-2 first produces phytoene from geranyl-geranyl pyrophosphate (GGPP). The phytoene dehydrogenase al-1 then introduces 5 desaturations to lead to 3,4-didehydrolycopene via the intermediates phytofluene, zeta-carotene, neurosporene and lycopene. Al-2 cyclase activity then converts 3,4-didehydrolycopene into torulene. Al-2 can also convet lycopene into gamma-carotene which in turn is converted to beta-carotene by an additional al-2 cyclization reaction. Torulene is the substrate of the dioxidase cao-2 that breaks the molecule, removing five carbon atoms to yield beta-apo-4'-carotenal, whereas the aldehyde dehydrogenase ylo-1 mediates the last step by converting beta-apo-4'-carotenal into neurosporaxanthin. This Neurospora crassa (strain ATCC 24698 / 74-OR23-1A / CBS 708.71 / DSM 1257 / FGSC 987) protein is Carotenoid dioxygenase.